We begin with the raw amino-acid sequence, 159 residues long: SsrA-binding protein (159 aa).

The tract at residues 134–159 is disordered; the sequence is KLHDKRETSKERDWNRQKNRLLKERG. Residues 137 to 159 are compositionally biased toward basic and acidic residues; that stretch reads DKRETSKERDWNRQKNRLLKERG.

It belongs to the SmpB family.

The protein resides in the cytoplasm. Its function is as follows. Required for rescue of stalled ribosomes mediated by trans-translation. Binds to transfer-messenger RNA (tmRNA), required for stable association of tmRNA with ribosomes. tmRNA and SmpB together mimic tRNA shape, replacing the anticodon stem-loop with SmpB. tmRNA is encoded by the ssrA gene; the 2 termini fold to resemble tRNA(Ala) and it encodes a 'tag peptide', a short internal open reading frame. During trans-translation Ala-aminoacylated tmRNA acts like a tRNA, entering the A-site of stalled ribosomes, displacing the stalled mRNA. The ribosome then switches to translate the ORF on the tmRNA; the nascent peptide is terminated with the 'tag peptide' encoded by the tmRNA and targeted for degradation. The ribosome is freed to recommence translation, which seems to be the essential function of trans-translation. This is SsrA-binding protein from Sinorhizobium fredii (strain NBRC 101917 / NGR234).